Consider the following 36-residue polypeptide: Photosystem I reaction center subunit VIII (36 aa).

Residues P7–Y29 form a helical membrane-spanning segment.

This sequence belongs to the PsaI family.

The protein localises to the plastid. Its subcellular location is the chloroplast thylakoid membrane. Its function is as follows. May help in the organization of the PsaL subunit. The polypeptide is Photosystem I reaction center subunit VIII (Adiantum capillus-veneris (Maidenhair fern)).